The sequence spans 417 residues: C6 finger transcription factor traC (417 aa).

The segment at Met-1 to Asn-40 is disordered. Over residues Arg-19–Asp-37 the composition is skewed to low complexity. The segment at residues Cys-44–Cys-73 is a DNA-binding region (zn(2)-C6 fungal-type). 2 disordered regions span residues Gln-75–Val-94 and Trp-104–Asp-128. A compositionally biased stretch (basic residues) spans Pro-80–Val-94. A compositionally biased stretch (polar residues) spans Trp-104–Glu-114.

The protein localises to the nucleus. Its function is as follows. C6 finger transcription factor; part of the tra gene cluster that produces terrestric acid. The clavatol biosynthesis cluster cla and the terrestric acid cluster tra are both involved in the production of peniphenones and penilactones. In Penicillium crustosum (Blue mold fungus), this protein is C6 finger transcription factor traC.